Reading from the N-terminus, the 128-residue chain is Cyclin-dependent protein kinase inhibitor SMR1 (128 aa).

The tract at residues 17–74 is disordered; that stretch reads PIKIRSKTSKTKKDEGDDDEDDLRCSTPTSQEHKIPAVVDSPPPPPRKPRPPPSAPSA. A compositionally biased stretch (pro residues) spans 57–71; that stretch reads SPPPPPRKPRPPPSA.

Interacts with CDKB1-1. Interacts with CPR5. Expressed in roots, leaves, stems, siliques and flowers. Expressed in the root elongation zone.

It localises to the nucleus. Probable cyclin-dependent protein kinase (CDK) inhibitor that functions as a repressor of mitosis in the endoreduplication cell cycle. Cooperates with SIM and SMR2 to promote endoreplication during leaf development. Specifically regulates endoreduplication in epidermal pavement cells to produce the cell size pattern. Is necessary for giant cell formation. Positive regulator of effector-triggered immunity (ETI). This is Cyclin-dependent protein kinase inhibitor SMR1 from Arabidopsis thaliana (Mouse-ear cress).